A 318-amino-acid polypeptide reads, in one-letter code: NADH-ubiquinone oxidoreductase chain 1 (318 aa).

Helical transmembrane passes span 2 to 22 (FLIN…FLTL), 69 to 89 (LLFI…WLPI), 102 to 122 (ILFI…SGWA), 146 to 166 (LAII…SSLI), 171 to 191 (YMWI…STLA), 222 to 242 (LFFL…AILF), 253 to 273 (EMFT…FLWI), and 294 to 314 (LPLT…LSSI).

It belongs to the complex I subunit 1 family. Core subunit of respiratory chain NADH dehydrogenase (Complex I) which is composed of 45 different subunits.

Its subcellular location is the mitochondrion inner membrane. The catalysed reaction is a ubiquinone + NADH + 5 H(+)(in) = a ubiquinol + NAD(+) + 4 H(+)(out). In terms of biological role, core subunit of the mitochondrial membrane respiratory chain NADH dehydrogenase (Complex I) which catalyzes electron transfer from NADH through the respiratory chain, using ubiquinone as an electron acceptor. Essential for the catalytic activity and assembly of complex I. This Oryctolagus cuniculus (Rabbit) protein is NADH-ubiquinone oxidoreductase chain 1 (MT-ND1).